We begin with the raw amino-acid sequence, 141 residues long: Large ribosomal subunit protein uL11 (141 aa).

It belongs to the universal ribosomal protein uL11 family. Part of the ribosomal stalk of the 50S ribosomal subunit. Interacts with L10 and the large rRNA to form the base of the stalk. L10 forms an elongated spine to which L12 dimers bind in a sequential fashion forming a multimeric L10(L12)X complex. In terms of processing, one or more lysine residues are methylated.

In terms of biological role, forms part of the ribosomal stalk which helps the ribosome interact with GTP-bound translation factors. The chain is Large ribosomal subunit protein uL11 from Synechococcus sp. (strain CC9311).